A 205-amino-acid polypeptide reads, in one-letter code: Adenylate kinase (205 aa).

Position 11–16 (Gly-11–Thr-16) interacts with ATP. The NMP stretch occupies residues Ser-31–Val-60. Residues Thr-32, Arg-37, Asp-58 to Val-60, Gly-86 to Arg-89, and Gln-93 contribute to the AMP site. The interval Lys-127–Asp-137 is LID. Arg-128 lines the ATP pocket. The AMP site is built by Arg-134 and Arg-145. Gly-173 provides a ligand contact to ATP.

It belongs to the adenylate kinase family. As to quaternary structure, monomer.

Its subcellular location is the cytoplasm. It carries out the reaction AMP + ATP = 2 ADP. The protein operates within purine metabolism; AMP biosynthesis via salvage pathway; AMP from ADP: step 1/1. Its function is as follows. Catalyzes the reversible transfer of the terminal phosphate group between ATP and AMP. Plays an important role in cellular energy homeostasis and in adenine nucleotide metabolism. This Micrococcus luteus (strain ATCC 4698 / DSM 20030 / JCM 1464 / CCM 169 / CCUG 5858 / IAM 1056 / NBRC 3333 / NCIMB 9278 / NCTC 2665 / VKM Ac-2230) (Micrococcus lysodeikticus) protein is Adenylate kinase.